We begin with the raw amino-acid sequence, 160 residues long: Small ribosomal subunit protein uS19v (160 aa).

The protein belongs to the universal ribosomal protein uS19 family.

The protein resides in the cytoplasm. This chain is Small ribosomal subunit protein uS19v (RPS15F), found in Arabidopsis thaliana (Mouse-ear cress).